Reading from the N-terminus, the 443-residue chain is Toxin YjjJ (443 aa).

The active-site Proton acceptor is the D342.

This sequence belongs to the HipA Ser/Thr kinase family.

In terms of biological role, toxic when overexpressed in E.coli, leading to long filamentous cells. The toxic effect is neutralized by non-cognate antitoxin HipB. Does not seem to inhibit DNA, RNA or protein synthesis, and unlike paralogous toxin HipA its toxic activity is not counteracted by overexpression of GltX. Binds DNA. Might be a protein kinase. The chain is Toxin YjjJ (yjjJ) from Escherichia coli (strain K12).